A 287-amino-acid polypeptide reads, in one-letter code: Lipoyl synthase (287 aa).

7 residues coordinate [4Fe-4S] cluster: Cys34, Cys39, Cys45, Cys60, Cys64, Cys67, and Ser273. The region spanning 46-262 is the Radical SAM core domain; the sequence is WNKRHATVMI…KYIAYSKGFL (217 aa).

The protein belongs to the radical SAM superfamily. Lipoyl synthase family. [4Fe-4S] cluster is required as a cofactor.

It localises to the cytoplasm. It catalyses the reaction [[Fe-S] cluster scaffold protein carrying a second [4Fe-4S](2+) cluster] + N(6)-octanoyl-L-lysyl-[protein] + 2 oxidized [2Fe-2S]-[ferredoxin] + 2 S-adenosyl-L-methionine + 4 H(+) = [[Fe-S] cluster scaffold protein] + N(6)-[(R)-dihydrolipoyl]-L-lysyl-[protein] + 4 Fe(3+) + 2 hydrogen sulfide + 2 5'-deoxyadenosine + 2 L-methionine + 2 reduced [2Fe-2S]-[ferredoxin]. It participates in protein modification; protein lipoylation via endogenous pathway; protein N(6)-(lipoyl)lysine from octanoyl-[acyl-carrier-protein]: step 2/2. Catalyzes the radical-mediated insertion of two sulfur atoms into the C-6 and C-8 positions of the octanoyl moiety bound to the lipoyl domains of lipoate-dependent enzymes, thereby converting the octanoylated domains into lipoylated derivatives. The chain is Lipoyl synthase from Wolbachia sp. subsp. Brugia malayi (strain TRS).